The sequence spans 280 residues: Acetyl-coenzyme A carboxylase carboxyl transferase subunit beta (280 aa).

One can recognise a CoA carboxyltransferase N-terminal domain in the interval Ala24–Gly280. Residues Cys28, Cys31, Cys47, and Cys50 each contribute to the Zn(2+) site. The C4-type zinc-finger motif lies at Cys28–Cys50.

This sequence belongs to the AccD/PCCB family. As to quaternary structure, acetyl-CoA carboxylase is a heterohexamer composed of biotin carboxyl carrier protein (AccB), biotin carboxylase (AccC) and two subunits each of ACCase subunit alpha (AccA) and ACCase subunit beta (AccD). Zn(2+) is required as a cofactor.

It is found in the cytoplasm. It catalyses the reaction N(6)-carboxybiotinyl-L-lysyl-[protein] + acetyl-CoA = N(6)-biotinyl-L-lysyl-[protein] + malonyl-CoA. The protein operates within lipid metabolism; malonyl-CoA biosynthesis; malonyl-CoA from acetyl-CoA: step 1/1. In terms of biological role, component of the acetyl coenzyme A carboxylase (ACC) complex. Biotin carboxylase (BC) catalyzes the carboxylation of biotin on its carrier protein (BCCP) and then the CO(2) group is transferred by the transcarboxylase to acetyl-CoA to form malonyl-CoA. This chain is Acetyl-coenzyme A carboxylase carboxyl transferase subunit beta, found in Sulfurihydrogenibium sp. (strain YO3AOP1).